The chain runs to 326 residues: Target of rapamycin complex subunit lst8 (326 aa).

WD repeat units follow at residues 1–37, 40–80, 83–122, 126–165, 168–207, 218–257, and 268–309; these read MNSN…CTRT, HQDS…PVIN, GVSK…LQCQ, QVNA…NEQL, ETDV…GEDL, AHKR…LMTE, and TSRG…REYS.

The protein belongs to the WD repeat LST8 family. In terms of assembly, part of the mechanistic target of rapamycin complex 1 (mTORC1) which contains MTOR, MLST8 and RPTOR. Component of the mechanistic target of rapamycin complex 2 (mTORC2), consisting in two heterotretramers composed of MTOR, MLST8, RICTOR and MAPKAP1/SIN1.

The protein localises to the lysosome membrane. It is found in the cytoplasm. Its function is as follows. Subunit of both mTORC1 and mTORC2, which regulates cell growth and survival in response to nutrient and hormonal signals. mTORC1 is activated in response to growth factors or amino acids. In response to nutrients, mTORC1 is recruited to the lysosome membrane and promotes protein, lipid and nucleotide synthesis by phosphorylating several substrates, such as ribosomal protein S6 kinase (RPS6KB1 and RPS6KB2) and EIF4EBP1 (4E-BP1). In the same time, it inhibits catabolic pathways by phosphorylating the autophagy initiation components ULK1 and ATG13, as well as transcription factor TFEB, a master regulators of lysosomal biogenesis and autophagy. The mTORC1 complex is inhibited in response to starvation and amino acid depletion. Within mTORC1, MLST8 interacts directly with MTOR and enhances its kinase activity. In nutrient-poor conditions, stabilizes the MTOR-RPTOR interaction and favors RPTOR-mediated inhibition of MTOR activity. As part of the mTORC2 complex, transduces signals from growth factors to pathways involved in proliferation, cytoskeletal organization, lipogenesis and anabolic output. mTORC2 is also activated by growth factors, but seems to be nutrient-insensitive. In response to growth factors, mTORC2 phosphorylates and activates AGC protein kinase family members, including AKT (AKT1, AKT2 and AKT3), PKC (PRKCA, PRKCB and PRKCE) and SGK1. mTORC2 functions upstream of Rho GTPases to regulate the actin cytoskeleton, probably by activating one or more Rho-type guanine nucleotide exchange factors. mTORC2 promotes the serum-induced formation of stress-fibers or F-actin. Within mTORC2, MLST8 acts as a bridge between MAPKAP1/SIN1 and MTOR. The polypeptide is Target of rapamycin complex subunit lst8 (mlst8) (Xenopus tropicalis (Western clawed frog)).